Consider the following 622-residue polypeptide: Interleukin-1 receptor-associated kinase-like 2 (622 aa).

In terms of domain architecture, Death spans 13-94; that stretch reads LDDLCRNIDT…RAAQIVLSWK (82 aa). The Protein kinase domain occupies 208 to 473; the sequence is FDQSHRISEG…LPEACEEAWA (266 aa). ATP-binding positions include 214-222, lysine 235, and 335-338; these read ISEGTFADI and KSAN. Disordered regions lie at residues 511 to 532 and 553 to 591; these read RVSEATGSSSNTPEETDDVDNS and LFTGHGAAQPSTSGRQEADSSSEACTGPQTPQNATETSW. Polar residues-rich tracts occupy residues 513-523 and 561-590; these read SEATGSSSNTP and QPSTSGRQEADSSSEACTGPQTPQNATETS.

It belongs to the protein kinase superfamily. TKL Ser/Thr protein kinase family. Pelle subfamily. Interacts with MYD88. IL-1 stimulation leads to the formation of a signaling complex which dissociates from the IL-1 receptor following the binding of PELI1. As to expression, ubiquitously expressed, with a higher expression observed in brain, spleen and liver. Isoform 1 and isoform 2 are considered agonist and isoform 3 and isoform 4 are considered antagonist.

Functionally, binds to the IL-1 type I receptor following IL-1 engagement, triggering intracellular signaling cascades leading to transcriptional up-regulation and mRNA stabilization. The protein is Interleukin-1 receptor-associated kinase-like 2 (Irak2) of Mus musculus (Mouse).